A 371-amino-acid chain; its full sequence is 4-hydroxy-3-methylbut-2-en-1-yl diphosphate synthase (flavodoxin) (371 aa).

[4Fe-4S] cluster is bound by residues Cys-270, Cys-273, Cys-305, and Glu-312.

The protein belongs to the IspG family. The cofactor is [4Fe-4S] cluster.

The catalysed reaction is (2E)-4-hydroxy-3-methylbut-2-enyl diphosphate + oxidized [flavodoxin] + H2O + 2 H(+) = 2-C-methyl-D-erythritol 2,4-cyclic diphosphate + reduced [flavodoxin]. Its pathway is isoprenoid biosynthesis; isopentenyl diphosphate biosynthesis via DXP pathway; isopentenyl diphosphate from 1-deoxy-D-xylulose 5-phosphate: step 5/6. Converts 2C-methyl-D-erythritol 2,4-cyclodiphosphate (ME-2,4cPP) into 1-hydroxy-2-methyl-2-(E)-butenyl 4-diphosphate. The sequence is that of 4-hydroxy-3-methylbut-2-en-1-yl diphosphate synthase (flavodoxin) from Shewanella piezotolerans (strain WP3 / JCM 13877).